Here is a 182-residue protein sequence, read N- to C-terminus: MSKQLNPVVPEQPIVLGKMGSTYGIRGWLRVFSSTENAESIFDYQPWFIQQGGKWQHVELEDWKRHSQDLIIKVKGVDDRDAANLLTNCEIVVDSKQLPELEEDDYYWKDLMGCQVVTTAGYELGKIIDMMETGSNDVMVVKANLKDAFGMKERLVPFLHGQVIKNVDLTAQRVEVDWDPGF.

One can recognise a PRC barrel domain in the interval 103 to 182 (EDDYYWKDLM…RVEVDWDPGF (80 aa)).

It belongs to the RimM family. In terms of assembly, binds ribosomal protein uS19.

It is found in the cytoplasm. Its function is as follows. An accessory protein needed during the final step in the assembly of 30S ribosomal subunit, possibly for assembly of the head region. Essential for efficient processing of 16S rRNA. May be needed both before and after RbfA during the maturation of 16S rRNA. It has affinity for free ribosomal 30S subunits but not for 70S ribosomes. This is Ribosome maturation factor RimM from Yersinia enterocolitica serotype O:8 / biotype 1B (strain NCTC 13174 / 8081).